Consider the following 606-residue polypeptide: Kelch repeat and BTB domain-containing protein 8 (606 aa).

One can recognise a BTB domain in the interval Thr-55–Glu-123. Residues Cys-158 to Gln-258 form the BACK domain. Kelch repeat units lie at residues Glu-342–Gly-396, Lys-397–Asp-447, Ile-449–Asp-487, Ser-488–Val-534, and Thr-546–Ala-593.

It belongs to the KBTBD8 family. In terms of assembly, component of the BCR(KBTBD8) E3 ubiquitin ligase complex.

Its subcellular location is the cytoplasm. It localises to the cytoskeleton. The protein localises to the spindle. It is found in the golgi apparatus. In terms of biological role, substrate-specific adapter of a BCR (BTB-CUL3-RBX1) E3 ubiquitin ligase complex that acts as a regulator of neural crest specification. The BCR(KBTBD8) complex acts by mediating monoubiquitination of target proteins. The chain is Kelch repeat and BTB domain-containing protein 8 (kbtbd8) from Xenopus tropicalis (Western clawed frog).